Here is a 127-residue protein sequence, read N- to C-terminus: Promotilin (127 aa).

A signal peptide spans 1 to 25 (MLSRKAVAALLLVHVTAMLASQTEG). The tract at residues 41–67 (REQNKRLRKSLRVQQRSKAAGRLEPQE) is disordered.

This sequence belongs to the motilin family. Present in the gut mucosa with the exception of the gastric corpus. Also present in medulla oblongata, nucleus of the solitary tract, hypophysis, spinal cord, hypothalamus, and cerebellum but not in the cerebral cortex.

It localises to the secreted. Its function is as follows. Plays an important role in the regulation of interdigestive gastrointestinal motility and indirectly causes rhythmic contraction of duodenal and colonic smooth muscle. In Cavia porcellus (Guinea pig), this protein is Promotilin (MLN).